A 149-amino-acid polypeptide reads, in one-letter code: MAFKLVDKVLSFMGFEEEVVEEEEKRARDEIVEEQPWQRKKEKDRGAVLSLHAQRQVRVVVVEPRAFDEVQGIADNLKNRRPVIVNLEQAEPDLAKRIVDFISGATYALNGSLQKVGSGIFLFVPNNMDIASDLKDPQKEKGIFTWMRS.

This sequence belongs to the SepF family. In terms of assembly, homodimer. Interacts with FtsZ.

It localises to the cytoplasm. Cell division protein that is part of the divisome complex and is recruited early to the Z-ring. Probably stimulates Z-ring formation, perhaps through the cross-linking of FtsZ protofilaments. Its function overlaps with FtsA. The chain is Cell division protein SepF from Pelotomaculum thermopropionicum (strain DSM 13744 / JCM 10971 / SI).